A 409-amino-acid polypeptide reads, in one-letter code: Glutamyl-tRNA(Gln) amidotransferase subunit D (409 aa).

Residues 68–390 form the Asparaginase/glutaminase domain; sequence RKISVLATGG…DLFRDLFRKN (323 aa). Active-site residues include Thr-78, Thr-152, Asp-153, and Lys-230.

It belongs to the asparaginase 1 family. GatD subfamily. As to quaternary structure, heterodimer of GatD and GatE.

The catalysed reaction is L-glutamyl-tRNA(Gln) + L-glutamine + ATP + H2O = L-glutaminyl-tRNA(Gln) + L-glutamate + ADP + phosphate + H(+). In terms of biological role, allows the formation of correctly charged Gln-tRNA(Gln) through the transamidation of misacylated Glu-tRNA(Gln) in organisms which lack glutaminyl-tRNA synthetase. The reaction takes place in the presence of glutamine and ATP through an activated gamma-phospho-Glu-tRNA(Gln). The GatDE system is specific for glutamate and does not act on aspartate. This chain is Glutamyl-tRNA(Gln) amidotransferase subunit D, found in Thermoplasma acidophilum (strain ATCC 25905 / DSM 1728 / JCM 9062 / NBRC 15155 / AMRC-C165).